The chain runs to 156 residues: Small ribosomal subunit protein uS7 (156 aa).

The protein belongs to the universal ribosomal protein uS7 family. Part of the 30S ribosomal subunit. Contacts proteins S9 and S11.

Its function is as follows. One of the primary rRNA binding proteins, it binds directly to 16S rRNA where it nucleates assembly of the head domain of the 30S subunit. Is located at the subunit interface close to the decoding center, probably blocks exit of the E-site tRNA. The polypeptide is Small ribosomal subunit protein uS7 (Acinetobacter baumannii (strain AB307-0294)).